A 184-amino-acid polypeptide reads, in one-letter code: Ribosome-recycling factor (184 aa).

Belongs to the RRF family.

The protein resides in the cytoplasm. Functionally, responsible for the release of ribosomes from messenger RNA at the termination of protein biosynthesis. May increase the efficiency of translation by recycling ribosomes from one round of translation to another. The polypeptide is Ribosome-recycling factor (Caldicellulosiruptor bescii (strain ATCC BAA-1888 / DSM 6725 / KCTC 15123 / Z-1320) (Anaerocellum thermophilum)).